The chain runs to 158 residues: Small ribosomal subunit protein uS7 (158 aa).

It belongs to the universal ribosomal protein uS7 family. Part of the 30S ribosomal subunit. Contacts proteins S9 and S11.

Its function is as follows. One of the primary rRNA binding proteins, it binds directly to 16S rRNA where it nucleates assembly of the head domain of the 30S subunit. Is located at the subunit interface close to the decoding center, probably blocks exit of the E-site tRNA. The chain is Small ribosomal subunit protein uS7 from Bacteroides fragilis (strain YCH46).